Reading from the N-terminus, the 749-residue chain is Cytosolic phospholipase A2 (749 aa).

Residues 1 to 178 are phospholipid binding; the sequence is MSFIDPYQHI…MKKLLGPKNS (178 aa). Serine 2 carries the phosphoserine modification. Residues 6-122 enclose the C2 domain; that stretch reads PYQHIIVEHQ…KVGEKKEVPF (117 aa). Residues aspartate 40, threonine 41, aspartate 43, asparagine 65, aspartate 93, alanine 94, and asparagine 95 each contribute to the Ca(2+) site. The PLA2c domain maps to 140–740; the sequence is SCPDLRFSMA…SNVEARRFFN (601 aa). Serine 228 serves as the catalytic Nucleophile. The residue at position 268 (threonine 268) is a Phosphothreonine. The disordered stretch occupies residues 409–457; that stretch reads GSQSRGSTMEEELENITTKHIVSNDSSDSDDESHEPKGTENEDAGSDYQ. 3 positions are modified to phosphoserine: serine 434, serine 435, and serine 437. At serine 505 the chain carries Phosphoserine; by MAPK. Serine 515 is subject to Phosphoserine. Lysine 541 is covalently cross-linked (Glycyl lysine isopeptide (Lys-Gly) (interchain with G-Cter in SUMO2)). Aspartate 549 acts as the Proton acceptor in catalysis. Lysine 606 participates in a covalent cross-link: Glycyl lysine isopeptide (Lys-Gly) (interchain with G-Cter in SUMO2). Residues serine 727 and serine 729 each carry the phosphoserine modification.

Interacts with KAT5. Phosphorylated at both Ser-505 and Ser-727 in response to mitogenic stimuli. As to expression, expressed in various cells and tissues such as macrophages, neutrophils, fibroblasts and lung endothelium. Expressed in platelets (at protein level).

It localises to the cytoplasm. It is found in the golgi apparatus membrane. The protein resides in the nucleus envelope. The catalysed reaction is a 1,2-diacyl-sn-glycero-3-phosphocholine + H2O = a 1-acyl-sn-glycero-3-phosphocholine + a fatty acid + H(+). The enzyme catalyses a 1-O-alkyl-2-acyl-sn-glycero-3-phosphocholine + H2O = a 1-O-alkyl-sn-glycero-3-phosphocholine + a fatty acid + H(+). It carries out the reaction a 1-acyl-sn-glycero-3-phosphocholine + H2O = sn-glycerol 3-phosphocholine + a fatty acid + H(+). It catalyses the reaction 1-hexadecanoyl-2-(5Z,8Z,11Z,14Z-eicosatetraenoyl)-sn-glycero-3-phosphocholine + H2O = 1-hexadecanoyl-sn-glycero-3-phosphocholine + (5Z,8Z,11Z,14Z)-eicosatetraenoate + H(+). The catalysed reaction is 1,2-di-(5Z,8Z,11Z,14Z-eicosatetraenoyl)-sn-glycero-3-phosphocholine + H2O = 1-(5Z,8Z,11Z,14Z-eicosatetraenoyl)-sn-glycero-3-phosphocholine + (5Z,8Z,11Z,14Z)-eicosatetraenoate + H(+). The enzyme catalyses 1-octadecanoyl-2-(5Z,8Z,11Z,14Z-eicosatetraenoyl)-sn-glycero-3-phosphocholine + H2O = 1-octadecanoyl-sn-glycero-3-phosphocholine + (5Z,8Z,11Z,14Z)-eicosatetraenoate + H(+). It carries out the reaction 1-hexadecanoyl-2-(9Z,12Z-octadecadienoyl)-sn-glycero-3-phosphocholine + H2O = (9Z,12Z)-octadecadienoate + 1-hexadecanoyl-sn-glycero-3-phosphocholine + H(+). It catalyses the reaction 1-octadecanoyl-2-(9Z,12Z,15Z-octadecatrienoyl)-sn-glycero-3-phosphocholine + H2O = (9Z,12Z,15Z)-octadecatrienoate + 1-octadecanoyl-sn-glycero-3-phosphocholine + H(+). The catalysed reaction is 1-(5Z,8Z,11Z,14Z-eicosatetraenoyl)-2-hexadecanoyl-sn-glycero-3-phosphocholine + H2O = 1-(5Z,8Z,11Z,14Z-eicosatetraenoyl)-sn-glycero-3-phosphocholine + hexadecanoate + H(+). The enzyme catalyses 1-O-hexadecyl-2-(5Z,8Z,11Z,14Z)-eicosatetraenoyl-sn-glycero-3-phosphocholine + H2O = 1-O-hexadecyl-sn-glycero-3-phosphocholine + (5Z,8Z,11Z,14Z)-eicosatetraenoate + H(+). It carries out the reaction 1,2-di-(9Z-octadecenoyl)-sn-glycero-3-phospho-(1'-sn-glycerol) + H2O = 1-(9Z-octadecenoyl)-sn-glycero-3-phospho-(1'-sn-glycerol) + (9Z)-octadecenoate + H(+). It catalyses the reaction 1-octadecanoyl-2-(5Z,8Z,11Z,14Z-eicosatetraenoyl)-sn-glycero-3-phosphate + H2O = 1-octadecanoyl-sn-glycero-3-phosphate + (5Z,8Z,11Z,14Z)-eicosatetraenoate + H(+). The catalysed reaction is 1-hexadecanoyl-sn-glycero-3-phosphocholine + H2O = sn-glycerol 3-phosphocholine + hexadecanoate + H(+). The enzyme catalyses 2-(prostaglandin E2)-sn-glycero-3-phosphoethanolamine + H2O = sn-glycero-3-phosphoethanolamine + prostaglandin E2 + H(+). It carries out the reaction 2-[(15S)-hydroxy-(5Z,8Z,11Z,13E)-eicosatetraenoyl]-sn-glycero-3-phosphocholine + H2O = (15S)-hydroxy-(5Z,8Z,11Z,13E)-eicosatetraenoate + sn-glycerol 3-phosphocholine + H(+). It catalyses the reaction 2-[(15R)-hydroxy-(5Z,8Z,11Z,13E)-eicosatetraenoyl]-sn-glycero-3-phosphocholine + H2O = (15R)-hydroxy-(5Z,8Z,11Z,13E)-eicosatetraenoate + sn-glycerol 3-phosphocholine + H(+). The catalysed reaction is 2-(prostaglandin E2)-sn-glycero-3-phosphocholine + H2O = prostaglandin E2 + sn-glycerol 3-phosphocholine + H(+). The enzyme catalyses 2-[(11R)-hydroxy-(5Z,8Z,12E,14Z)-eicosatetraenoyl]-sn-glycero-3-phosphocholine + H2O = (11R)-hydroxy-(5Z,8Z,12E,14Z)-eicosatetraenoate + sn-glycerol 3-phosphocholine + H(+). It carries out the reaction 1-(5Z,8Z,11Z,14Z-eicosatetraenoyl)-2-O-hexadecyl-sn-glycero-3-phosphocholine + H2O = 2-O-hexadecyl-sn-glycero-3-phosphocholine + (5Z,8Z,11Z,14Z)-eicosatetraenoate + H(+). It catalyses the reaction 1-octadecanoyl-2-(5Z,8Z,11Z,14Z-eicosatetraenoyl)-sn-glycero-3-phosphocholine + glycerol = 1-(5Z,8Z,11Z,14Z-eicosatetraenoyl)-glycerol + 1-octadecanoyl-sn-glycero-3-phosphocholine. The catalysed reaction is 1-octadecanoyl-2-(9Z,12Z,15Z-octadecatrienoyl)-sn-glycero-3-phosphocholine + glycerol = 1-(9Z,12Z,15Z-octadecatrienoyl)-glycerol + 1-octadecanoyl-sn-glycero-3-phosphocholine. It participates in membrane lipid metabolism; glycerophospholipid metabolism. The protein operates within lipid metabolism; arachidonate metabolism. Its pathway is lipid metabolism; prostaglandin biosynthesis. It functions in the pathway lipid metabolism; leukotriene B4 biosynthesis. With respect to regulation, activated by cytosolic calcium, which is necessary for binding to membrane lipids. Activated by phosphorylation in response to mitogenic stimuli. Activated by ceramide-1-phosphate. Binding (via C2 domain) to ceramide-1-phosphate increases the affinity for membrane lipids. Can be activated by phosphoinositides in the absence of calcium. Inhibited by ANXA5 in a calcium- and substrate-dependent way. In terms of biological role, has primarily calcium-dependent phospholipase and lysophospholipase activities, with a major role in membrane lipid remodeling and biosynthesis of lipid mediators of the inflammatory response. Plays an important role in embryo implantation and parturition through its ability to trigger prostanoid production. Preferentially hydrolyzes the ester bond of the fatty acyl group attached at sn-2 position of phospholipids (phospholipase A2 activity). Selectively hydrolyzes sn-2 arachidonoyl group from membrane phospholipids, providing the precursor for eicosanoid biosynthesis via the cyclooxygenase pathway. In an alternative pathway of eicosanoid biosynthesis, hydrolyzes sn-2 fatty acyl chain of eicosanoid lysophopholipids to release free bioactive eicosanoids. Hydrolyzes the ester bond of the fatty acyl group attached at sn-1 position of phospholipids (phospholipase A1 activity) only if an ether linkage rather than an ester linkage is present at the sn-2 position. This hydrolysis is not stereospecific. Has calcium-independent phospholipase A2 and lysophospholipase activities in the presence of phosphoinositides. Has O-acyltransferase activity. Catalyzes the transfer of fatty acyl chains from phospholipids to a primary hydroxyl group of glycerol (sn-1 or sn-3), potentially contributing to monoacylglycerol synthesis. This is Cytosolic phospholipase A2 (PLA2G4A) from Homo sapiens (Human).